A 444-amino-acid polypeptide reads, in one-letter code: Trigger factor (444 aa).

Residues 166–251 enclose the PPIase FKBP-type domain; sequence GDQIVIDFKG…VKAVKAPKPA (86 aa).

Belongs to the FKBP-type PPIase family. Tig subfamily.

Its subcellular location is the cytoplasm. It catalyses the reaction [protein]-peptidylproline (omega=180) = [protein]-peptidylproline (omega=0). Involved in protein export. Acts as a chaperone by maintaining the newly synthesized protein in an open conformation. Functions as a peptidyl-prolyl cis-trans isomerase. The polypeptide is Trigger factor (Cereibacter sphaeroides (strain ATCC 17025 / ATH 2.4.3) (Rhodobacter sphaeroides)).